A 375-amino-acid polypeptide reads, in one-letter code: ELAV-like protein 2 (375 aa).

3 RRM domains span residues 67–145 (TNLI…YARP), 153–233 (ANLY…FANN), and 292–370 (WCIF…FKTS).

It belongs to the RRM elav family. As to quaternary structure, part of a ribonucleoprotein (RNP) complex, at least composed of elavl1/elrA and/or elavl2/elrB, igf2bp3/vg1RBP, ddx6/Xp54, ybx2/frgy2, lsm14b/rap55b and, in a subset of RNP complexes, stau1/staufen. Binds RNA as a homooligomer.

It localises to the cytoplasm. Its subcellular location is the cell cortex. Its function is as follows. Binds to poly-U elements and AU-rich elements (AREs) in the 3'-UTR of target mRNAs. Required for the vegetal localization of vg1 mRNA. Probably required for nervous system development. The sequence is that of ELAV-like protein 2 from Xenopus tropicalis (Western clawed frog).